An 87-amino-acid polypeptide reads, in one-letter code: Mu-theraphotoxin-Cg1a (87 aa).

An N-terminal signal peptide occupies residues 1-21; it reads MKVLVLITLAVLGAMFVWTSA. A propeptide spanning residues 22–50 is cleaved from the precursor; the sequence is AELEERGSDQRDSPAWVKSMERIFQSEER. Intrachain disulfides connect C52-C66, C59-C71, and C65-C79.

It belongs to the neurotoxin 10 (Hwtx-1) family. 39 (Jztx-34) subfamily. In terms of tissue distribution, expressed by the venom gland.

It localises to the secreted. In terms of biological role, potent and selective inhibitor of hNav1.7/SCN9A (IC(50)=610 nM). Also shows a weak activity towards Nav1.3/SCN3A (IC(50)=7950 nM). In addition, inhibits voltage-gated potassium channels (Kv) in rat DRG neurons. It does not alter the voltage dependence of activation, but it causes a small hyperpolarizing shift in the steady-state inactivations of Nav1.7/SNC9A. Chimera experiments show that the toxin binds to the DIIS3-S4 linker (site 4) of Nav1.7/SCN9A, whereas Nav1.7/SCN9A Asp-827 residue is shown by substitution experiments to be critical for its sensitivity. The toxin traps the domain II voltage sensor in the closed configuration, and not in an outward position. In vivo, shows analgesic activity in three rodent pain models (formalin-induced, acid-induced, and thermal). This chain is Mu-theraphotoxin-Cg1a, found in Chilobrachys guangxiensis (Chinese earth tiger tarantula).